The following is a 271-amino-acid chain: Elongation factor Ts (271 aa).

An involved in Mg(2+) ion dislocation from EF-Tu region spans residues 76-79; the sequence is TDFV.

This sequence belongs to the EF-Ts family.

Its subcellular location is the cytoplasm. In terms of biological role, associates with the EF-Tu.GDP complex and induces the exchange of GDP to GTP. It remains bound to the aminoacyl-tRNA.EF-Tu.GTP complex up to the GTP hydrolysis stage on the ribosome. This chain is Elongation factor Ts, found in Saccharopolyspora erythraea (strain ATCC 11635 / DSM 40517 / JCM 4748 / NBRC 13426 / NCIMB 8594 / NRRL 2338).